Consider the following 151-residue polypeptide: Transcriptional regulator MraZ (151 aa).

SpoVT-AbrB domains lie at 5–51 (AHEL…PVAE) and 81–124 (AEIL…GREQ).

Belongs to the MraZ family. Forms oligomers.

The protein localises to the cytoplasm. Its subcellular location is the nucleoid. In Neisseria meningitidis serogroup A / serotype 4A (strain DSM 15465 / Z2491), this protein is Transcriptional regulator MraZ.